Here is a 418-residue protein sequence, read N- to C-terminus: Tyrosine--tRNA ligase (418 aa).

Y38 lines the L-tyrosine pocket. Positions 43 to 52 match the 'HIGH' region motif; sequence CTARSLHIGS. Y175 and Q179 together coordinate L-tyrosine. Positions 235 to 239 match the 'KMSKS' region motif; sequence KMGKT. K238 contacts ATP. One can recognise an S4 RNA-binding domain in the interval 348–413; sequence LSVVKLLQVS…CGKKRHLKVV (66 aa).

The protein belongs to the class-I aminoacyl-tRNA synthetase family. TyrS type 1 subfamily. In terms of assembly, homodimer.

It localises to the cytoplasm. The catalysed reaction is tRNA(Tyr) + L-tyrosine + ATP = L-tyrosyl-tRNA(Tyr) + AMP + diphosphate + H(+). Its function is as follows. Catalyzes the attachment of tyrosine to tRNA(Tyr) in a two-step reaction: tyrosine is first activated by ATP to form Tyr-AMP and then transferred to the acceptor end of tRNA(Tyr). The chain is Tyrosine--tRNA ligase from Ehrlichia ruminantium (strain Welgevonden).